The chain runs to 118 residues: Small nuclear ribonucleoprotein Sm D2 (118 aa).

Residues 1–31 (MSLLNKPKSEMTPEELQKREEEEFNTGPLSV) form a disordered region. The residue at position 2 (S2) is an N-acetylserine. Residues K6 and K8 each participate in a glycyl lysine isopeptide (Lys-Gly) (interchain with G-Cter in SUMO2) cross-link. Residues 7–21 (PKSEMTPEELQKREE) are compositionally biased toward basic and acidic residues. S9 is modified (phosphoserine). T12 carries the post-translational modification Phosphothreonine. The Sm domain maps to 29 to 115 (LSVLTQSVKN…VIVVLRNPLI (87 aa)).

This sequence belongs to the snRNP core protein family. In terms of assembly, core component of the spliceosomal U1, U2, U4 and U5 small nuclear ribonucleoproteins (snRNPs), the building blocks of the spliceosome. Most spliceosomal snRNPs contain a common set of Sm proteins, SNRPB, SNRPD1, SNRPD2, SNRPD3, SNRPE, SNRPF and SNRPG that assemble in a heptameric protein ring on the Sm site of the small nuclear RNA to form the core snRNP. Component of the U1 snRNP. The U1 snRNP is composed of the U1 snRNA and the 7 core Sm proteins SNRPB, SNRPD1, SNRPD2, SNRPD3, SNRPE, SNRPF and SNRPG, and at least three U1 snRNP-specific proteins SNRNP70/U1-70K, SNRPA/U1-A and SNRPC/U1-C. Component of the U4/U6-U5 tri-snRNP complex composed of the U4, U6 and U5 snRNAs and at least PRPF3, PRPF4, PRPF6, PRPF8, PRPF31, SNRNP200, TXNL4A, SNRNP40, SNRPB, SNRPD1, SNRPD2, SNRPD3, SNRPE, SNRPF, SNRPG, DDX23, CD2BP2, PPIH, SNU13, EFTUD2, SART1 and USP39, plus LSM2, LSM3, LSM4, LSM5, LSM6, LSM7 and LSM8. Component of the minor spliceosome, which splices U12-type introns. Part of the SMN-Sm complex that contains SMN1, GEMIN2/SIP1, DDX20/GEMIN3, GEMIN4, GEMIN5, GEMIN6, GEMIN7, GEMIN8, STRAP/UNRIP and the Sm proteins SNRPB, SNRPD1, SNRPD2, SNRPD3, SNRPE, SNRPF and SNRPG; catalyzes core snRNPs assembly. Forms a 6S pICln-Sm complex composed of CLNS1A/pICln, SNRPD1, SNRPD2, SNRPE, SNRPF and SNRPG; ring-like structure where CLNS1A/pICln mimics additional Sm proteins and which is unable to assemble into the core snRNP. Interacts with SMN1; the interaction is direct. Interacts with GEMIN2; the interaction is direct. Interacts with SNRPD1; the interaction is direct. Interacts with SNRPF; the interaction is direct.

It is found in the cytoplasm. The protein resides in the cytosol. Its subcellular location is the nucleus. Plays a role in pre-mRNA splicing as a core component of the spliceosomal U1, U2, U4 and U5 small nuclear ribonucleoproteins (snRNPs), the building blocks of the spliceosome. Component of both the pre-catalytic spliceosome B complex and activated spliceosome C complexes. As a component of the minor spliceosome, involved in the splicing of U12-type introns in pre-mRNAs. The chain is Small nuclear ribonucleoprotein Sm D2 (SNRPD2) from Homo sapiens (Human).